The following is a 318-amino-acid chain: Cytochrome c biogenesis protein CcsA (318 aa).

A run of 8 helical transmembrane segments spans residues 17-37 (VLAL…ISFW), 45-65 (SAVV…QLVL), 75-95 (ISNL…AQLL), 104-124 (IVSA…SFAL), 149-169 (VIMC…AVLF), 224-244 (TITV…VWAN), 258-275 (TWAL…HTRF), and 287-307 (VAVA…LLGI).

The protein belongs to the CcmF/CycK/Ccl1/NrfE/CcsA family. May interact with ccs1.

The protein resides in the cellular thylakoid membrane. Its function is as follows. Required during biogenesis of c-type cytochromes (cytochrome c6 and cytochrome f) at the step of heme attachment. The polypeptide is Cytochrome c biogenesis protein CcsA (Prochlorococcus marinus (strain MIT 9313)).